The sequence spans 440 residues: Xaa-Pro dipeptidase (440 aa).

The Mn(2+) site is built by aspartate 244, aspartate 255, histidine 335, glutamate 380, and glutamate 419.

The protein belongs to the peptidase M24B family. Bacterial-type prolidase subfamily. It depends on Mn(2+) as a cofactor.

It carries out the reaction Xaa-L-Pro dipeptide + H2O = an L-alpha-amino acid + L-proline. Functionally, splits dipeptides with a prolyl residue in the C-terminal position. This is Xaa-Pro dipeptidase from Shewanella piezotolerans (strain WP3 / JCM 13877).